A 477-amino-acid polypeptide reads, in one-letter code: MGKTPLLREDGRCQRNTFGGSKASSKGSSSSSSNNTVSSKKKPRRKADALMFIQIFIHLLKSNIGTGFLGLPLAVKNAGLLVGPVSLLAIGALTVHCMDILLNCACHLTSRLQRSFVNYEETTMYSLETCPSPWLRTHSVWGRYVVSFLLIVTQLGFCSVYFMFMADNLQQIVEEAHFTSNVCQPRQSLVMTSILDTRFYMLTILPFLILLVLVQNPQVLSIFSTLATITTLSSLALIFEYLIQIPHHSHLPLVASWKTFLLFFGTAIFTFEGVGMVLPLKSQMKSPQQFPAVLYLGMSFVIFLYICLGTLGYMKFGADTQASITLNLPNCWLYQSVKLMYSVGIFFTYALQFHVPAEIIVPYVVSRASENWALFIDLTVRAALVCLTCFSAVLIPRLDLVISLVGSVSSSALALIIPPLLEIATFYSENISCTTIAKDIMISILGLLGCVLGTYQALYEMTQQSRFPMLNSTNVHT.

Basic and acidic residues predominate over residues 1 to 13 (MGKTPLLREDGRC). The segment at 1–42 (MGKTPLLREDGRCQRNTFGGSKASSKGSSSSSSNNTVSSKKK) is disordered. Topologically, residues 1 to 54 (MGKTPLLREDGRCQRNTFGGSKASSKGSSSSSSNNTVSSKKKPRRKADALMFIQ) are cytoplasmic. Residues 19–38 (GGSKASSKGSSSSSSNNTVS) show a composition bias toward low complexity. Residues 55–75 (IFIHLLKSNIGTGFLGLPLAV) form a helical membrane-spanning segment. Topologically, residues 76–77 (KN) are extracellular. Residues 78–98 (AGLLVGPVSLLAIGALTVHCM) form a helical membrane-spanning segment. Topologically, residues 99–144 (DILLNCACHLTSRLQRSFVNYEETTMYSLETCPSPWLRTHSVWGRY) are cytoplasmic. A helical transmembrane segment spans residues 145–165 (VVSFLLIVTQLGFCSVYFMFM). The Extracellular segment spans residues 166–202 (ADNLQQIVEEAHFTSNVCQPRQSLVMTSILDTRFYML). A helical membrane pass occupies residues 203 to 223 (TILPFLILLVLVQNPQVLSIF). The Cytoplasmic segment spans residues 224–225 (ST). Residues 226–246 (LATITTLSSLALIFEYLIQIP) traverse the membrane as a helical segment. Residues 247–259 (HHSHLPLVASWKT) are Extracellular-facing. Residues 260–280 (FLLFFGTAIFTFEGVGMVLPL) traverse the membrane as a helical segment. At 281 to 291 (KSQMKSPQQFP) the chain is on the cytoplasmic side. A helical transmembrane segment spans residues 292-312 (AVLYLGMSFVIFLYICLGTLG). The Extracellular segment spans residues 313 to 344 (YMKFGADTQASITLNLPNCWLYQSVKLMYSVG). A helical membrane pass occupies residues 345-365 (IFFTYALQFHVPAEIIVPYVV). Topologically, residues 366-374 (SRASENWAL) are cytoplasmic. The chain crosses the membrane as a helical span at residues 375–395 (FIDLTVRAALVCLTCFSAVLI). Residues 396–399 (PRLD) are Extracellular-facing. Residues 400–420 (LVISLVGSVSSSALALIIPPL) traverse the membrane as a helical segment. Over 421 to 439 (LEIATFYSENISCTTIAKD) the chain is Cytoplasmic. The helical transmembrane segment at 440–460 (IMISILGLLGCVLGTYQALYE) threads the bilayer. Residues 461–477 (MTQQSRFPMLNSTNVHT) lie on the Extracellular side of the membrane.

This sequence belongs to the amino acid/polyamine transporter 2 family.

The protein resides in the membrane. The sequence is that of Proton-coupled amino acid transporter 3 (Slc36a3) from Rattus norvegicus (Rat).